A 682-amino-acid chain; its full sequence is Nephrocystin-1-like protein (682 aa).

The stretch at 10–100 forms a coiled coil; it reads LQDAINRFPQ…ALSPEKEQLS (91 aa). A disordered region spans residues 96 to 188; sequence KEQLSFSVSV…PLESKTLNER (93 aa). The span at 128 to 148 shows a compositional bias: acidic residues; it reads NDDESEDSDNDSEIIETDVQL. One can recognise an SH3 domain in the interval 215–275; that stretch reads VRGNVFVAID…PKTYLQHVKE (61 aa).

This sequence belongs to the nephrocystin-1 family. In terms of tissue distribution, expressed in ciliated sensory neurons of the head (amphid neurons) and the tail in hermaphrodites (phasmid neurons) and males (sensory ray neurons).

Plays a role in the extension of dendrites from phasmid ciliated sensory neurons. May be necessary for initial assembly of the cilium. The protein is Nephrocystin-1-like protein of Caenorhabditis elegans.